Reading from the N-terminus, the 451-residue chain is Ubiquitin hydrolase B (451 aa).

The region spanning R19–V450 is the USP domain. Residues N83–P115 are compositionally biased toward low complexity. The interval N83–D154 is disordered. A compositionally biased stretch (polar residues) spans I116–T135. The Nucleophile role is filled by H399. The Proton acceptor role is filled by H408.

Belongs to the peptidase C19 family. As to quaternary structure, interacts with mkkA (via F-box/WD40 domains).

It carries out the reaction Thiol-dependent hydrolysis of ester, thioester, amide, peptide and isopeptide bonds formed by the C-terminal Gly of ubiquitin (a 76-residue protein attached to proteins as an intracellular targeting signal).. Required for proper prespore cell patterning. Plays a role in stabilizing mkkA by preventing it from being targeted for degradation. ubcB and ubpB differentially control ubiquitination/deubiquitination and degradation of mkkA in a cell-type-specific and temporally regulated manner. The sequence is that of Ubiquitin hydrolase B (ubpB) from Dictyostelium discoideum (Social amoeba).